A 1385-amino-acid chain; its full sequence is Serine-aspartate repeat-containing protein D (1385 aa).

Residues 1-35 form the signal peptide; sequence MLNRENKTAITRKGMVSNRLNKFSIRKYTVGTASI. Positions 23–34 match the YSIRK-G/S signaling motif motif; sequence FSIRKYTVGTAS. Residues 36 to 568 form a ligand binding A region region; sequence LVGTTLIFGL…NNQSGGAGQE (533 aa). Disordered regions lie at residues 54–162 and 200–224; these read ESTN…DLLE and ETLVDNNSNSNNENNADIILPKSTA. 2 stretches are compositionally biased toward polar residues: residues 62-71 and 94-109; these read EATTSASDNQ and EMVSSQGNETTSNGNK. Basic and acidic residues predominate over residues 130 to 145; that stretch reads KSDEQASPKSTNEDLN. Over residues 146–155 the composition is skewed to polar residues; that stretch reads TKQTISNQEG. The span at 205–214 shows a compositional bias: low complexity; sequence NNSNSNNENN. CNA-B domains lie at 569-680, 681-791, 792-901, 902-1012, and 1013-1123; these read VYKI…IYKP, KYNL…YKTP, KYNL…FYKP, TYNL…YKTP, and KYSL…EEET. Disordered regions lie at residues 856–886, 972–992, and 1077–1361; these read FETPSGYTPTQVGSGTDEGIDSNGTSTTGVI, YTPTSVTSGNDTEKDSNGLTT, and FEKP…SNNA. 2 stretches are compositionally biased toward polar residues: residues 860–869 and 972–981; these read SGYTPTQVGS and YTPTSVTSGN. Over residues 1081–1090 the composition is skewed to low complexity; that stretch reads TGLTQTGTNT. Acidic residues-rich tracts occupy residues 1091–1101 and 1118–1324; these read TEDDKDADGGE and YYEE…DSDS. The short motif at 1348–1352 is the LPXTG sorting signal element; that stretch reads LPETG. Thr1351 carries the post-translational modification Pentaglycyl murein peptidoglycan amidated threonine. A propeptide spans 1352–1385 (removed by sortase); the sequence is GNENSGSNNATLFGGLFAALGSLLLFGRRKKQNK.

It belongs to the serine-aspartate repeat-containing protein (SDr) family. In terms of assembly, interacts with host DSG1; this interaction increases S.aureus adherence to keratinocytes.

It is found in the secreted. Its subcellular location is the cell wall. In terms of biological role, cell surface-associated calcium-binding protein which plays an important role in adhesion and pathogenesis. Mediates interactions with components of the extracellular matrix such as host DSG1 to promote bacterial adhesion to host cells. Contributes to the resistance to killing by innate immune components such as neutrophils present in blood and thus attenuates bacterial clearance. This Staphylococcus aureus (strain Mu50 / ATCC 700699) protein is Serine-aspartate repeat-containing protein D (sdrD).